We begin with the raw amino-acid sequence, 742 residues long: Phosphoribosylformylglycinamidine synthase subunit PurL (742 aa).

Residue His50 is part of the active site. ATP contacts are provided by Tyr53 and Lys92. Glu94 serves as a coordination point for Mg(2+). Substrate-binding positions include 95–98 (SHNH) and Arg117. Catalysis depends on His96, which acts as the Proton acceptor. A Mg(2+)-binding site is contributed by Asp118. Residue Gln241 participates in substrate binding. Asp269 is a Mg(2+) binding site. 313–315 (ESQ) lines the substrate pocket. Residues Asp494 and Gly531 each contribute to the ATP site. Asn532 lines the Mg(2+) pocket. Ser534 is a substrate binding site.

This sequence belongs to the FGAMS family. As to quaternary structure, monomer. Part of the FGAM synthase complex composed of 1 PurL, 1 PurQ and 2 PurS subunits.

The protein localises to the cytoplasm. It catalyses the reaction N(2)-formyl-N(1)-(5-phospho-beta-D-ribosyl)glycinamide + L-glutamine + ATP + H2O = 2-formamido-N(1)-(5-O-phospho-beta-D-ribosyl)acetamidine + L-glutamate + ADP + phosphate + H(+). The protein operates within purine metabolism; IMP biosynthesis via de novo pathway; 5-amino-1-(5-phospho-D-ribosyl)imidazole from N(2)-formyl-N(1)-(5-phospho-D-ribosyl)glycinamide: step 1/2. Its function is as follows. Part of the phosphoribosylformylglycinamidine synthase complex involved in the purines biosynthetic pathway. Catalyzes the ATP-dependent conversion of formylglycinamide ribonucleotide (FGAR) and glutamine to yield formylglycinamidine ribonucleotide (FGAM) and glutamate. The FGAM synthase complex is composed of three subunits. PurQ produces an ammonia molecule by converting glutamine to glutamate. PurL transfers the ammonia molecule to FGAR to form FGAM in an ATP-dependent manner. PurS interacts with PurQ and PurL and is thought to assist in the transfer of the ammonia molecule from PurQ to PurL. The polypeptide is Phosphoribosylformylglycinamidine synthase subunit PurL (Sinorhizobium fredii (strain NBRC 101917 / NGR234)).